Here is a 141-residue protein sequence, read N- to C-terminus: Hemoglobin subunit alpha-3 (141 aa).

Positions 1–141 (VLSPADKTNV…VSTVLTSKYR (141 aa)) constitute a Globin domain. His-58 lines the O2 pocket. Heme b is bound at residue His-87.

This sequence belongs to the globin family. In terms of assembly, heterotetramer of two alpha chains and two beta chains. Red blood cells.

Its function is as follows. Involved in oxygen transport from the lung to the various peripheral tissues. This chain is Hemoglobin subunit alpha-3, found in Pan troglodytes (Chimpanzee).